The primary structure comprises 307 residues: DDRGK domain-containing protein 1 (307 aa).

Residues 1-2 are Lumenal-facing; it reads MD. The chain crosses the membrane as a helical span at residues 3–23; it reads LILLVGIATALLLILITLYFL. The Cytoplasmic segment spans residues 24-307; the sequence is QSKNAKTETK…TPVAAGESSA (284 aa). The tract at residues 31–175 is disordered; the sequence is ETKAAAQPQR…EADRLAKEER (145 aa). The segment covering 52-83 has biased composition (low complexity); that stretch reads RRAQIARNQRNRLRQNQNAPAVAAAAAPAAAV. The span at 107–175 shows a compositional bias: basic and acidic residues; the sequence is LDEKMGAKKR…EADRLAKEER (69 aa).

Belongs to the DDRGK1 family. As to quaternary structure, interacts with Atg9; the interaction is transient.

It localises to the endoplasmic reticulum membrane. Substrate adapter for ufmylation, the covalent attachment of the ubiquitin-like modifier UFM1 to substrate proteins. Required for ufmylation of Atg9; protects the nervous system during aging, possibly by stabilizing Atg9 and supporting its function. The chain is DDRGK domain-containing protein 1 from Drosophila virilis (Fruit fly).